The chain runs to 272 residues: Isoprenyl transferase (272 aa).

Aspartate 32 is a catalytic residue. Aspartate 32 provides a ligand contact to Mg(2+). Residues 33 to 36 (GNGR), tryptophan 37, arginine 45, histidine 49, and 77 to 79 (STE) contribute to the substrate site. The active-site Proton acceptor is the asparagine 80. Substrate is bound by residues tryptophan 81, arginine 83, arginine 200, and 206-208 (RIS). Position 219 (glutamate 219) interacts with Mg(2+).

This sequence belongs to the UPP synthase family. In terms of assembly, homodimer. Mg(2+) is required as a cofactor.

Its function is as follows. Catalyzes the condensation of isopentenyl diphosphate (IPP) with allylic pyrophosphates generating different type of terpenoids. The chain is Isoprenyl transferase from Prochlorococcus marinus subsp. pastoris (strain CCMP1986 / NIES-2087 / MED4).